Consider the following 202-residue polypeptide: Phospholipase A2 inhibitor gamma subunit A (202 aa).

Residues 1-19 form the signal peptide; that stretch reads MKSLQIICLLFIFVARGSC. Cystine bridges form between Cys-22/Cys-47, Cys-25/Cys-32, Cys-40/Cys-68, Cys-74/Cys-95, Cys-96/Cys-101, Cys-119/Cys-144, Cys-137/Cys-166, and Cys-170/Cys-192.

It belongs to the CNF-like-inhibitor family. In terms of assembly, heteromer composed of subunit A and subunit B. In terms of tissue distribution, expressed by the liver.

Its subcellular location is the secreted. In terms of biological role, inhibits the enzymatic activity of the phospholipase A2 (PLA2). The polypeptide is Phospholipase A2 inhibitor gamma subunit A (Elaphe climacophora (Japanese rat snake)).